Reading from the N-terminus, the 367-residue chain is tRNA (cytosine(34)-C(5))-methyltransferase, mitochondrial (367 aa).

Residues 170–176 (CAAPGGK), Glu193, Asp224, and Asp242 contribute to the S-adenosyl-L-methionine site. The active-site Nucleophile is the Cys296.

It belongs to the class I-like SAM-binding methyltransferase superfamily. RsmB/NOP family.

Its subcellular location is the mitochondrion matrix. The catalysed reaction is cytidine(34) in mitochondrial tRNA + S-adenosyl-L-methionine = 5-methylcytidine(34) in mitochondrial tRNA + S-adenosyl-L-homocysteine + H(+). Its function is as follows. Mitochondrial tRNA methyltransferase that mediates methylation of cytosine to 5-methylcytosine (m5C) at position 34 of mt-tRNA(Met). mt-tRNA(Met) methylation at cytosine(34) takes place at the wobble position of the anticodon and initiates the formation of 5-formylcytosine (f(5)c) at this position. mt-tRNA(Met) containing the f(5)c modification at the wobble position enables recognition of the AUA codon in addition to the AUG codon, expanding codon recognition in mitochondrial translation. The chain is tRNA (cytosine(34)-C(5))-methyltransferase, mitochondrial from Danio rerio (Zebrafish).